The following is a 1435-amino-acid chain: Protein clueless (1435 aa).

The tract at residues 1-97 is disordered; the sequence is MALEMDSKNS…KPEGDGDADA (97 aa). Over residues 18–35 the composition is skewed to low complexity; that stretch reads AAAATTKTNKAKENNNLA. Over residues 38–50 the composition is skewed to polar residues; that stretch reads KKNQSQNLVNGNG. Residues 58–67 show a composition bias toward basic residues; the sequence is TKKKGKKNRN. Ser-266 is subject to Phosphoserine. A Clu domain is found at 420 to 662; sequence RAEDAFSSKL…RTFPPDVNFL (243 aa). Composition is skewed to basic and acidic residues over residues 719–731 and 752–762; these read KKPEETQSEEKKQ and PNEKEKDTPVE. Disordered stretches follow at residues 719–762 and 952–998; these read KKPE…TPVE and VSND…SSSS. Residues 959 to 975 are compositionally biased toward basic residues; that stretch reads KKRGGNGGKHNKHKSSK. The segment covering 988 to 998 has biased composition (low complexity); the sequence is NGGSTTSSSSS. 3 TPR repeats span residues 1096–1129, 1222–1255, and 1257–1290; these read AYNFYTTGQAKIQQGLFKEGYELISEALNLLNNV, ALIDSNISLILHALGEYELSLRFIEHALKLNLKY, and GNKAMHVAVSYHLMARTQSCMGDFRSALNNEKET. Positions 1407–1435 are disordered; it reads EVLAPQDNNKEQAATAQQLTNGDKVAVSS. Residues 1417 to 1435 are compositionally biased toward polar residues; the sequence is EQAATAQQLTNGDKVAVSS.

Belongs to the CLU family.

It localises to the cytoplasm. Its function is as follows. mRNA-binding protein involved in proper cytoplasmic distribution of mitochondria. This is Protein clueless from Drosophila persimilis (Fruit fly).